Reading from the N-terminus, the 280-residue chain is DegV domain-containing protein spyM18_1709 (280 aa).

Residues 3–280 (WKIVTDSGCD…DGGLLMGYEI (278 aa)) enclose the DegV domain. Positions 63 and 91 each coordinate hexadecanoate.

Functionally, may bind long-chain fatty acids, such as palmitate, and may play a role in lipid transport or fatty acid metabolism. The protein is DegV domain-containing protein spyM18_1709 of Streptococcus pyogenes serotype M18 (strain MGAS8232).